Reading from the N-terminus, the 210-residue chain is MTKGILGRKIGMTQVFAENGELIPVTVIEATPNVVLQKKTTETDGYNAIQLGFEDKREKLANKPEQGHVAKASTAPKRFIREIRDADVDGLEVGQEVKVEVFAAGETVDVTGISKGKGFQGAIKRHGQSRGPMSHGSRYHRRPGSMGPVAPNRVFKGKKLAGRMGGDQITIQNLEIVQVDVERNLLLIKGNVPGAKKSLVVVQGAVKASK.

Positions 119–151 are disordered; the sequence is FQGAIKRHGQSRGPMSHGSRYHRRPGSMGPVAP.

Belongs to the universal ribosomal protein uL3 family. Part of the 50S ribosomal subunit. Forms a cluster with proteins L14 and L19.

Its function is as follows. One of the primary rRNA binding proteins, it binds directly near the 3'-end of the 23S rRNA, where it nucleates assembly of the 50S subunit. This is Large ribosomal subunit protein uL3 from Bacillus cytotoxicus (strain DSM 22905 / CIP 110041 / 391-98 / NVH 391-98).